We begin with the raw amino-acid sequence, 336 residues long: 7,8-didemethyl-8-hydroxy-5-deazariboflavin synthase (336 aa).

One can recognise a Radical SAM core domain in the interval 18-249; the sequence is ITYSPAYTLV…TSIAIQVPPN (232 aa). [4Fe-4S] cluster contacts are provided by Cys-32, Cys-36, and Cys-39.

It belongs to the radical SAM superfamily. CofG family. Consists of two subunits, CofG and CofH. [4Fe-4S] cluster is required as a cofactor.

It catalyses the reaction 5-amino-5-(4-hydroxybenzyl)-6-(D-ribitylimino)-5,6-dihydrouracil + S-adenosyl-L-methionine = 7,8-didemethyl-8-hydroxy-5-deazariboflavin + 5'-deoxyadenosine + L-methionine + NH4(+) + H(+). Its pathway is cofactor biosynthesis; coenzyme F0 biosynthesis. Functionally, catalyzes the radical-mediated synthesis of 7,8-didemethyl-8-hydroxy-5-deazariboflavin from 5-amino-5-(4-hydroxybenzyl)-6-(D-ribitylimino)-5,6-dihydrouracil. The polypeptide is 7,8-didemethyl-8-hydroxy-5-deazariboflavin synthase (Synechococcus elongatus (strain ATCC 33912 / PCC 7942 / FACHB-805) (Anacystis nidulans R2)).